Consider the following 345-residue polypeptide: Isocitrate lyase (345 aa).

58-60 is a substrate binding site; that stretch reads SGY. Residue aspartate 98 participates in Mg(2+) binding. Residue cysteine 135 is the Proton acceptor of the active site. Substrate contacts are provided by residues 136 to 137, arginine 170, 230 to 234, and threonine 260; these read GH and NYSSS. The tract at residues 318-345 is disordered; the sequence is DPEARRRIEESEGFSEEQADPITSNDDD. Residues 328–345 are compositionally biased toward acidic residues; that stretch reads SEGFSEEQADPITSNDDD.

Homotetramer or homotrimer. Mg(2+) serves as cofactor.

The catalysed reaction is D-threo-isocitrate = glyoxylate + succinate. Its pathway is carbohydrate metabolism; glyoxylate cycle; (S)-malate from isocitrate: step 1/2. Functionally, involved in the metabolic adaptation in response to environmental changes. Catalyzes the reversible formation of succinate and glyoxylate from isocitrate, a key step of the glyoxylate cycle, which operates as an anaplerotic route for replenishing the tricarboxylic acid cycle during growth on fatty acid substrates. The chain is Isocitrate lyase (aceA) from Haloferax volcanii (strain ATCC 29605 / DSM 3757 / JCM 8879 / NBRC 14742 / NCIMB 2012 / VKM B-1768 / DS2) (Halobacterium volcanii).